A 179-amino-acid polypeptide reads, in one-letter code: Fimbrial subunit ElfA (179 aa).

An N-terminal signal peptide occupies residues 1 to 21 (MKKSVLTAFITVVCATSSVMA).

It belongs to the fimbrial protein family.

The protein resides in the fimbrium. Functionally, part of the elfADCG-ycbUVF fimbrial operon, which promotes adhesion of bacteria to different abiotic surfaces. ElfA is the major fimbrial subunit produced by this operon. The protein is Fimbrial subunit ElfA (elfA) of Escherichia coli (strain K12).